The primary structure comprises 441 residues: MPGDEKPVGVAVLGLGNVGSEVVRIIENSAEDLAARVGAPLVLRGIGVRRVTTDRGVPIELLTDDIEELVAREDVDIVVEVMGPVEPSRKAILGALERGKSVVTANKALLATSTGELAQAAESAHVDLYFEAAVAGAIPVIRPLTQSLAGDTVLRVAGIVNGTTNYILSAMDSTGADYASALADASALGYAEADPTADVEGYDAAAKAAILASIAFHTRVTADDVYREGITKVTPADFGSAHALGCTIKLLSICERITTDEGSQRVSARVYPALVPLSHPLAAVNGAFNAVVVEAEAAGRLMFYGQGAGGAPTASAVTGDLVMAARNRVLGSRGPRESKYAQLPVAPMGFIETRYYVSMNVADKPGVLSAVAAEFAKREVSIAEVRQEGVVDEGGRRVGARIVVVTHLATDAALSETVDALDDLDVVQGVSSVIRLEGTGL.

2 residues coordinate NADP(+): Asn-17 and Val-18. NAD(+)-binding residues include Val-18, Val-37, and Gly-47. An NADPH-binding site is contributed by Val-18. The NADP(+) site is built by Arg-49, Arg-50, and Lys-107. Arg-49 lines the NADPH pocket. Residue Lys-107 coordinates NADPH. Na(+)-binding residues include Glu-131, Val-134, Gly-136, and Ile-138. NADP(+)-binding residues include Gly-189 and Glu-192. L-homoserine contacts are provided by Glu-192 and Asp-203. The Proton donor role is filled by Lys-207. Position 309 (Gly-309) interacts with NADP(+). Gly-309 is an NAD(+) binding site. Gly-309 provides a ligand contact to NADPH. Residues 356–435 (YVSMNVADKP…VVQGVSSVIR (80 aa)) enclose the ACT domain.

This sequence belongs to the homoserine dehydrogenase family. Requires a metal cation as cofactor.

The catalysed reaction is L-homoserine + NADP(+) = L-aspartate 4-semialdehyde + NADPH + H(+). The enzyme catalyses L-homoserine + NAD(+) = L-aspartate 4-semialdehyde + NADH + H(+). It functions in the pathway amino-acid biosynthesis; L-methionine biosynthesis via de novo pathway; L-homoserine from L-aspartate: step 3/3. Its pathway is amino-acid biosynthesis; L-threonine biosynthesis; L-threonine from L-aspartate: step 3/5. Its function is as follows. Catalyzes the conversion of L-aspartate-beta-semialdehyde (L-Asa) to L-homoserine (L-Hse), the third step in the biosynthesis of threonine and methionine from aspartate. In Mycobacterium tuberculosis (strain CDC 1551 / Oshkosh), this protein is Homoserine dehydrogenase (hom).